The following is a 474-amino-acid chain: Phenylalanine--tRNA ligase alpha subunit (474 aa).

L-phenylalanine is bound by residues T317, 356-358 (QLE), and Y396. E398 is a binding site for Mg(2+). An L-phenylalanine-binding site is contributed by F421.

It belongs to the class-II aminoacyl-tRNA synthetase family. Phe-tRNA synthetase alpha subunit type 2 subfamily. Tetramer of two alpha and two beta subunits. The cofactor is Mg(2+).

The protein resides in the cytoplasm. The catalysed reaction is tRNA(Phe) + L-phenylalanine + ATP = L-phenylalanyl-tRNA(Phe) + AMP + diphosphate + H(+). The polypeptide is Phenylalanine--tRNA ligase alpha subunit (Methanocorpusculum labreanum (strain ATCC 43576 / DSM 4855 / Z)).